A 179-amino-acid chain; its full sequence is MISYEFQTHLPKGKDSSLNASSENKELYVQATHFNNTILLQIRLNGEMDSTYEVSSKGLNPILDINVPLAGNLGNTGGDYDDEEEEFVRDHLSDYQVVTKLGDSADPKVPVVCVQIAELYRRVILPEVSGTMAQDNMQFSLLISMSSKIWRATKEQSADDNDFGKLVFVLKCIKDMYAK.

It belongs to the PSMG3 family. In terms of assembly, component of the 20S proteasome chaperone. Forms a heterodimer with POC4 that binds to proteasome precursors. Interacts with POP2.

Functionally, involved in 20S proteasome assembly, facilitating the alpha-ring formation. This chain is Proteasome chaperone 3 (IRC25), found in Saccharomyces cerevisiae (strain ATCC 204508 / S288c) (Baker's yeast).